A 60-amino-acid polypeptide reads, in one-letter code: Cytotoxin 5 (60 aa).

Cystine bridges form between cysteine 3–cysteine 21, cysteine 14–cysteine 38, cysteine 42–cysteine 53, and cysteine 54–cysteine 59.

It belongs to the three-finger toxin family. Short-chain subfamily. Type IA cytotoxin sub-subfamily. Monomer in solution; Homodimer and oligomer in the presence of negatively charged lipids forming a pore with a size ranging between 20 and 30 Angstroms. As to expression, expressed by the venom gland.

It localises to the secreted. The protein resides in the target cell membrane. Its function is as follows. Shows cytolytic activity on many different cells by forming pore in lipid membranes. In vivo, increases heart rate or kills the animal by cardiac arrest. In addition, it binds to heparin with high affinity, interacts with Kv channel-interacting protein 1 (KCNIP1) in a calcium-independent manner, and binds to integrin alpha-V/beta-3 (ITGAV/ITGB3) with moderate affinity. The polypeptide is Cytotoxin 5 (Naja haje haje (Egyptian cobra)).